Reading from the N-terminus, the 177-residue chain is uncharacterized protein (177 aa).

Residues 100–115 (QVQPHQQTHQQSQQTH) are compositionally biased toward low complexity. The segment at 100-135 (QVQPHQQTHQQSQQTHNKTVANSGDPPPPPPSQPNK) is disordered. Residues 141-158 (WIVGMVIGVVVLYLLYRY) form a helical membrane-spanning segment.

It localises to the membrane. This is an uncharacterized protein from Aedes vexans (Inland floodwater mosquito).